Consider the following 140-residue polypeptide: MSFLGLGGQNPNGPSNPQKLLAAEAELDMVTDMFNRLVESCHEKCIKADYSSGDLNANEGLCLDRCVAKYFDVNTKVGEVSMRGADGNYGLEDTANTVHAEAWKQRILHGPTLNVKYVHRIKVHEIVRLTMVYLAPWHFN.

The Twin CX3C motif signature appears at 41–66 (CHEKCIKADYSSGDLNANEGLCLDRC). Cystine bridges form between C41/C66 and C45/C62.

Belongs to the small Tim family. As to quaternary structure, heterohexamer; composed of 3 copies of TIM9 and 3 copies of TIM10, named soluble 70 kDa complex. Associates directly with the TIM22 complex, whose core is composed of TIM22 and TIM54. Interacts with the transmembrane regions of multi-pass transmembrane proteins in transit.

The protein resides in the mitochondrion inner membrane. Functionally, mitochondrial intermembrane chaperone that participates in the import and insertion of multi-pass transmembrane proteins into the mitochondrial inner membrane. Also required for the transfer of beta-barrel precursors from the TOM complex to the sorting and assembly machinery (SAM complex) of the outer membrane. Acts as a chaperone-like protein that protects the hydrophobic precursors from aggregation and guide them through the mitochondrial intermembrane space. This is Mitochondrial import inner membrane translocase subunit TIM10 (TIM10) from Yarrowia lipolytica (strain CLIB 122 / E 150) (Yeast).